The following is a 177-amino-acid chain: Protein C2-DOMAIN ABA-RELATED 4 (177 aa).

One can recognise a C2 domain in the interval 4–118; that stretch reads ACPARTSSLM…LRMQLDGLPS (115 aa). Residues arginine 33, aspartate 34, aspartate 39, aspartate 85, histidine 86, aspartate 87, and aspartate 93 each coordinate Ca(2+).

Belongs to the plant CAR protein family. In terms of assembly, dimers and oligomers. Binds to PYR/PYL/RCAR abscisic acid intracellular receptors in an ABA-independent manner, both at the plasma membrane and in the nucleus. Interacts directly with PYR1, PYL1, PYL4, PYL6 and PYL8. Binds phospholipids in a Ca(2+)-dependent manner. Interacts with YchF1. Requires Ca(2+) as cofactor.

The protein resides in the cell membrane. It localises to the nucleus. Its subcellular location is the cytoplasm. It is found in the cytosol. Mediates the transient calcium-dependent interaction of PYR/PYL/RCAR abscisic acid (ABA) receptors with the plasma membrane and thus regulates ABA sensitivity. Stimulates the GTPase/ATPase activities of YchF1, and regulates its subcellular localization. Promotes tolerance towards salinity stress by limiting the accumulation of reactive oxygen species (ROS). Promotes resistance to bacterial pathogens (e.g. Xanthomonas oryzae pv. oryzae and P.syringae pv. tomato DC3000). Binds liposomes in the absence of exogenous Ca(2+), but this activity is enhanced in the presence of Ca(2+) and generates membrane curvature. In Arabidopsis thaliana (Mouse-ear cress), this protein is Protein C2-DOMAIN ABA-RELATED 4.